A 290-amino-acid chain; its full sequence is Nucleoid occlusion protein (290 aa).

The segment at residues glutamate 153–leucine 172 is a DNA-binding region (H-T-H motif).

This sequence belongs to the ParB family.

The protein localises to the cytoplasm. Its subcellular location is the nucleoid. In terms of biological role, effects nucleoid occlusion by binding relatively nonspecifically to DNA and preventing the assembly of the division machinery in the vicinity of the nucleoid, especially under conditions that disturb the cell cycle. It helps to coordinate cell division and chromosome segregation by preventing the formation of the Z ring through the nucleoid, which would cause chromosome breakage. The sequence is that of Nucleoid occlusion protein from Bacillus cereus (strain ATCC 10987 / NRS 248).